The primary structure comprises 147 residues: MDPVRVAIQRLAHCFALPTCAHPGDAGLDLFAAHAVPLSIAPGRFTRVPTGIALGLPAGYMAFVQPRSGLAARHGISVLNTPGLIDCGYRGEIQVLLINHGEVPVVVSRGDRIAQLVVLPVPQVQFVEVSTLESSERQTGSFGSSGY.

Residues 67-69 (RSG), N80, and 84-86 (LID) contribute to the substrate site.

This sequence belongs to the dUTPase family. Mg(2+) serves as cofactor.

It carries out the reaction dUTP + H2O = dUMP + diphosphate + H(+). The protein operates within pyrimidine metabolism; dUMP biosynthesis; dUMP from dCTP (dUTP route): step 2/2. This enzyme is involved in nucleotide metabolism: it produces dUMP, the immediate precursor of thymidine nucleotides and it decreases the intracellular concentration of dUTP so that uracil cannot be incorporated into DNA. The polypeptide is Deoxyuridine 5'-triphosphate nucleotidohydrolase (Gloeobacter violaceus (strain ATCC 29082 / PCC 7421)).